We begin with the raw amino-acid sequence, 185 residues long: MISVNDLRNGMTIEMDGTVYQVIEFLHVKPGKGAAFVRTKLKNILTGATIETTFRAGEKVEQANVDRREYQFLYADQGVWVFMNNETFEQIELTEEQVGNAPNFLLENMTVQIASWKGQVIGVDLPNTVELKVVETEPGFKGDTATGTYKPAKLETGYVVQVPLFVNTGDVIKVDTRTGEYLSRA.

Belongs to the elongation factor P family.

The protein resides in the cytoplasm. It participates in protein biosynthesis; polypeptide chain elongation. Involved in peptide bond synthesis. Stimulates efficient translation and peptide-bond synthesis on native or reconstituted 70S ribosomes in vitro. Probably functions indirectly by altering the affinity of the ribosome for aminoacyl-tRNA, thus increasing their reactivity as acceptors for peptidyl transferase. The polypeptide is Elongation factor P (Symbiobacterium thermophilum (strain DSM 24528 / JCM 14929 / IAM 14863 / T)).